The chain runs to 250 residues: Hydroxyacylglutathione hydrolase (250 aa).

Zn(2+)-binding residues include H53, H55, D57, H58, H110, D127, and H165.

This sequence belongs to the metallo-beta-lactamase superfamily. Glyoxalase II family. Monomer. The cofactor is Zn(2+).

It catalyses the reaction an S-(2-hydroxyacyl)glutathione + H2O = a 2-hydroxy carboxylate + glutathione + H(+). The protein operates within secondary metabolite metabolism; methylglyoxal degradation; (R)-lactate from methylglyoxal: step 2/2. In terms of biological role, thiolesterase that catalyzes the hydrolysis of S-D-lactoyl-glutathione to form glutathione and D-lactic acid. This Buchnera aphidicola subsp. Schizaphis graminum (strain Sg) protein is Hydroxyacylglutathione hydrolase.